The sequence spans 426 residues: Tubby protein homolog 1 (426 aa).

The segment at 16–28 (QRKMLEDKQKQKR) is required for localization to cilia in AWB sensory neurons. Residues 19 to 39 (MLEDKQKQKRHQSAGSVRTTS) are disordered.

The protein belongs to the TUB family. Interacts with rgb-3. As to expression, expressed in ciliated sensory neurons.

The protein localises to the cytoplasm. The protein resides in the cell projection. It localises to the axon. It is found in the dendrite. Its subcellular location is the cilium. In terms of biological role, has a role in fat regulation independent of daf-16. Implicated in ciliar sensory function which is required for normal sensory behavior such as chemotaxis. Required for extension and growth of sensory neuronal cilia during postembryonic development, potentially via mediating signaling protein transport and localization of PI(4,5)P2 to the ciliary base. Functions in life span control via the insulin/IGF-1 pathway. Thought to be involved in neuronal trafficking. In Caenorhabditis elegans, this protein is Tubby protein homolog 1.